The following is a 404-amino-acid chain: MSPSDVPINWKRNLTVTWLGCFLTGAAFSLVMPFLPLYVEQLGVTGHSALNMWSGLVFSITFLFSAIASPFWGGLADRKGRKIMLLRSALGMAIVMLLMGMAQNIWQFLILRALLGLLGGFIPNANALIATQVPRHKSGWALGTLSTGGVSGALLGPLAGGLLAGHYGLRPVFFITASVLFICFLLTFFFIRENFLPVSKKEILHVREVVASLKNPRLVLSLFVTTLIIQVATGSIAPILTLYVRELAGNVSNIAFISGMIASVPGVAALLSAPRLGKLGDRIGPEKILIVALIISVLLLIPMSFVQTPWQLALLRFLLGAADGALLPAVQTLLVYNSTNQIAGRIFSYNQSFRDIGNVTGPLMGAAISASYGFRAVFCVTAGVVLFNAIYSWNSLRRRRLAIE.

11 helical membrane-spanning segments follow: residues L19–V39, L56–A76, L90–I110, A113–V133, G149–L169, P171–I191, L222–L242, I254–P274, I288–T308, F317–N337, and A376–L396.

The protein belongs to the major facilitator superfamily. DHA1 family. MdtG (TC 2.A.1.2.20) subfamily.

It localises to the cell inner membrane. The polypeptide is Multidrug resistance protein MdtG (Salmonella paratyphi C (strain RKS4594)).